Consider the following 670-residue polypeptide: Lebercilin-like protein (670 aa).

Residues 24–44 form a disordered region; the sequence is RRSAECKRSPGTGDFSRNSNA. Coiled-coil stretches lie at residues 148–259 and 305–336; these read LHKI…EREE and AAQT…IKNI. Residues 351 to 402 form a disordered region; that stretch reads YPKVSSTKSVQADRKSLPFTSMRHQGTQKSDVAPLTTKGKKATGNMDRKEKS. Polar residues predominate over residues 368–380; it reads PFTSMRHQGTQKS. A coiled-coil region spans residues 420–440; sequence EDSKTKYEDLSREEKHLEVQV. Disordered stretches follow at residues 495 to 520, 533 to 594, and 606 to 647; these read RSMQ…PLRQ, LHHG…FRDK, and GYVL…AFGD. The span at 546-558 shows a compositional bias: polar residues; sequence AGNTKYSHSTSKH. 3 stretches are compositionally biased toward basic and acidic residues: residues 560–572, 585–594, and 621–632; these read SNRE…HSDS, KAKDTTFRDK, and GSEEPLQSKESH. The segment covering 637 to 647 has biased composition (polar residues); the sequence is SQASASNAFGD.

Belongs to the LCA5 family.

The polypeptide is Lebercilin-like protein (Papio anubis (Olive baboon)).